Reading from the N-terminus, the 123-residue chain is Large ribosomal subunit protein uL14 (123 aa).

Belongs to the universal ribosomal protein uL14 family. Part of the 50S ribosomal subunit. Forms a cluster with proteins L3 and L19. In the 70S ribosome, L14 and L19 interact and together make contacts with the 16S rRNA in bridges B5 and B8.

In terms of biological role, binds to 23S rRNA. Forms part of two intersubunit bridges in the 70S ribosome. In Aliivibrio fischeri (strain ATCC 700601 / ES114) (Vibrio fischeri), this protein is Large ribosomal subunit protein uL14.